Here is a 60-residue protein sequence, read N- to C-terminus: Large ribosomal subunit protein bL32 (60 aa).

A compositionally biased stretch (basic residues) spans 1 to 16; that stretch reads MAVPKKKTSKSRKNMR. Residues 1-20 form a disordered region; the sequence is MAVPKKKTSKSRKNMRRAHD.

This sequence belongs to the bacterial ribosomal protein bL32 family.

The protein is Large ribosomal subunit protein bL32 of Geobacter metallireducens (strain ATCC 53774 / DSM 7210 / GS-15).